The sequence spans 468 residues: Glutamate--tRNA ligase (468 aa).

Positions 9–19 (PSPTGSIHIGN) match the 'HIGH' region motif. Residues 239–243 (KLSKR) carry the 'KMSKS' region motif. Lysine 242 is an ATP binding site.

This sequence belongs to the class-I aminoacyl-tRNA synthetase family. Glutamate--tRNA ligase type 1 subfamily. Monomer.

Its subcellular location is the cytoplasm. The catalysed reaction is tRNA(Glu) + L-glutamate + ATP = L-glutamyl-tRNA(Glu) + AMP + diphosphate. In terms of biological role, catalyzes the attachment of glutamate to tRNA(Glu) in a two-step reaction: glutamate is first activated by ATP to form Glu-AMP and then transferred to the acceptor end of tRNA(Glu). This Blochmanniella pennsylvanica (strain BPEN) protein is Glutamate--tRNA ligase.